Consider the following 135-residue polypeptide: Small ribosomal subunit protein uS9 (135 aa).

Basic and acidic residues predominate over residues 108–118; the sequence is VGDPRRTEPHK. Residues 108-135 form a disordered region; that stretch reads VGDPRRTEPHKPNRSTKGPRAKRQKSYR. Positions 119 to 135 are enriched in basic residues; sequence PNRSTKGPRAKRQKSYR.

It belongs to the universal ribosomal protein uS9 family.

In Pyrococcus horikoshii (strain ATCC 700860 / DSM 12428 / JCM 9974 / NBRC 100139 / OT-3), this protein is Small ribosomal subunit protein uS9 (rps9).